The chain runs to 318 residues: Probable serine/threonine-protein kinase MRK1 homolog (318 aa).

In terms of domain architecture, Protein kinase spans 40-313 (YRYVEMIGRG…ASELLRKQFF (274 aa)). Residues 46-54 (IGRGSFGVV) and Lys-68 each bind ATP. The active-site Proton acceptor is the Asp-159.

The protein belongs to the protein kinase superfamily. CMGC Ser/Thr protein kinase family. GSK-3 subfamily.

Its subcellular location is the cytoplasm. The protein resides in the nucleus. It catalyses the reaction L-seryl-[protein] + ATP = O-phospho-L-seryl-[protein] + ADP + H(+). The catalysed reaction is L-threonyl-[protein] + ATP = O-phospho-L-threonyl-[protein] + ADP + H(+). In terms of biological role, may play a role in the initiation and completion of mitosis. This is Probable serine/threonine-protein kinase MRK1 homolog (MRK1) from Encephalitozoon cuniculi (strain GB-M1) (Microsporidian parasite).